The chain runs to 332 residues: Very-long-chain 3-oxoacyl-CoA reductase (332 aa).

A helical membrane pass occupies residues Gly-15–Leu-35. Val-60, Asp-115, Asp-123, Asn-142, Lys-177, Tyr-209, Lys-213, Val-242, and Thr-244 together coordinate NADP(+). Tyr-209 serves as the catalytic Proton donor. Lys-213 (lowers pKa of active site Tyr) is an active-site residue.

Belongs to the short-chain dehydrogenases/reductases (SDR) family.

The protein localises to the endoplasmic reticulum membrane. It carries out the reaction a very-long-chain (3R)-3-hydroxyacyl-CoA + NADP(+) = a very-long-chain 3-oxoacyl-CoA + NADPH + H(+). Its pathway is lipid metabolism; fatty acid biosynthesis. Component of the microsomal membrane bound fatty acid elongation system, which produces the 26-carbon very long-chain fatty acids (VLCFA) from palmitate. Catalyzes the reduction of the 3-ketoacyl-CoA intermediate that is formed in each cycle of fatty acid elongation. VLCFAs serve as precursors for ceramide and sphingolipids. The polypeptide is Very-long-chain 3-oxoacyl-CoA reductase (Neurospora crassa (strain ATCC 24698 / 74-OR23-1A / CBS 708.71 / DSM 1257 / FGSC 987)).